Reading from the N-terminus, the 1138-residue chain is Protein RECOGNITION OF PERONOSPORA PARASITICA 7 (1138 aa).

Residues 166–422 (EENVKKLVGY…CNYVLSLSFE (257 aa)) enclose the NB-ARC domain. ATP is bound at residue 189 to 196 (GMGGLGKT). 19 LRR repeats span residues 544–565 (QYPTTLHVEKDINNPKLRSLVV), 566–581 (VTLGSWNMAGSSFTRL), 582–606 (ELLRVLDLVQAKLKGGKLASCIGKL), 607–631 (IHLRYLSLEYAEVTHIPYSLGNLKL), 655–680 (MQELRYLALPSLIERKTKLELSNLVK), 681–705 (LETLENFSTKNSSLEDLRGMVRLRT), 707–726 (TIELIEETSLETLAASIGGL), 727–752 (KYLEKLEIDDLGSKMRTKEAGIVFDF), 754–774 (HLKRLRLELYMPRLSKEQHFP), 775–797 (SHLTTLYLQHCRLEEDPMPILEK), 798–825 (LLQLKELELGHKSFSGKKMVCSSCGFPQ), 847–871 (MPLLLTLNIFDCRKLKQLPDEHLPS), 873–893 (LTAISLKKCGLEDPIPTLERL), 894–918 (VHLKELSLSELCGRIMVCTGGGFPQ), 940–963 (MPRLHTLEIRRCLKLKKLPNGFPQ), 1028–1050 (LEKLLHLKNVSLFQSFSGKRMVC), 1055–1078 (FPQLQKLSIREIEWEEWIVEQGSM), 1079–1103 (PLLHTLYIGVCPNLKELPDGLRFIY), and 1115–1138 (KKRLSEGGEDYYKVQHIPSVEFDD).

The protein belongs to the disease resistance NB-LRR family.

In terms of biological role, disease resistance protein required for incompatible interactions with avirulent strains of Hyaloperonospora arabidopsidis (downy mildew), isolate Hpa-Hiks1 in cv. Columbia. The sequence is that of Protein RECOGNITION OF PERONOSPORA PARASITICA 7 from Arabidopsis thaliana (Mouse-ear cress).